A 718-amino-acid chain; its full sequence is MLVHLFRVGIRGGPFPGRLLPPLRFQTFSAVRYSDGYRSSSLFWAVAHLRSQLWAHLPRAPLAPRWSPSAWCWVGGALLGPMVLSKHPHLCLVALCEAEEATPASSTPHVVGSRFNWKLFWQFLRPHLLVLGVAVVLALGAALVNVQIPLLLGQLVEIVAKYTRDHVGSFMTESQNLSTHLLILYGVQGLLTFGYLVLLSHVGERMAVDMRRALFSSLLRQDIAFFDANKTGQLVSRLTTDVQEFKSSFKLVISQGLRSCTQVAGCLVSLSMLSTRLTLLLMLATPALMGVGTLMGSGLRKLSRQCQEQIARAMGVADEALGNVRTVRAFAMEQREEERYGAELEACRCRAEELGRGIALSQGLSNIAFNCMVLGTLFIGGSLVAGQQLTGGDLMSFLVASQTVQRSMANLSVLFGQVVRGLSAGARVFEYMALNPCIPLSGGCCVPKEQLRGSVTFQNVCFSYPCRPGFEVLKDFTLTLPPGKIVALVGQSGGGKTTVASLLERFYDPTAGVVMLDGRDLRTLDPSWLRGQVVGFISQEPVLFGTTIMENIRFGKLEASDEEVYAAAREANAHEFITSFPEGYNTIVGERGTTLSGGQKQRLAIARALIKQPTVLILDEATSALDAESERVVQEALDRASAGRTVLVIAHRLSTVRGAHRIVVMADGRVWEAGTHEELLKKGGLYAELIRRQALDAPRTAAPLPKKPEGPRNHQHKS.

The N-terminal 25 residues, 1-25 (MLVHLFRVGIRGGPFPGRLLPPLRF), are a transit peptide targeting the mitochondrion. The next 3 helical transmembrane spans lie at 128 to 148 (LLVLGVAVVLALGAALVNVQI), 179 to 199 (THLLILYGVQGLLTFGYLVLL), and 279 to 299 (LLLMLATPALMGVGTLMGSGL). An ABC transmembrane type-1 domain is found at 133 to 420 (VAVVLALGAA…LSVLFGQVVR (288 aa)). The region spanning 455–692 (VTFQNVCFSY…GGLYAELIRR (238 aa)) is the ABC transporter domain. Residue 490–497 (GQSGGGKT) participates in ATP binding. Positions 697-718 (APRTAAPLPKKPEGPRNHQHKS) are disordered.

This sequence belongs to the ABC transporter superfamily. ABCB family. Multidrug resistance exporter (TC 3.A.1.201) subfamily. As to quaternary structure, the mitochondrial potassium channel (mitoK(ATP)) is composed of 4 subunits of CCDC51/MITOK and 4 subunits of ABCB8/MITOSUR. Physically interacts with PAAT. Interacts with Neuropilin-1 (NRP1) in mitochondria.

Its subcellular location is the mitochondrion inner membrane. Channel activity inhibited by ATP via ABCB8/MITOSUR subunit. In terms of biological role, ATP-binding subunit of the mitochondrial ATP-gated potassium channel (mitoK(ATP)). Together with pore-forming subunit CCDC51/MITOK of the mitoK(ATP) channel, mediates ATP-dependent potassium currents across the mitochondrial inner membrane. An increase in ATP intracellular levels closes the channel, inhibiting K(+) transport, whereas a decrease in ATP levels enhances K(+) uptake in the mitochondrial matrix. Plays a role in mitochondrial iron transport. Required for maintenance of normal cardiac function, possibly by influencing mitochondrial iron export and regulating the maturation of cytosolic iron sulfur cluster-containing enzymes. The chain is Mitochondrial potassium channel ATP-binding subunit (ABCB8) from Pongo abelii (Sumatran orangutan).